The primary structure comprises 417 residues: FK506-binding protein 3 (417 aa).

Disordered regions lie at residues 42–129 (SLDD…LSPE) and 191–307 (EGCG…DKPK). Acidic residues-rich tracts occupy residues 61 to 84 (FDDE…EESE), 99 to 120 (SEEE…EFEE), and 197 to 222 (CACD…DASD). Composition is skewed to basic and acidic residues over residues 236–249 (ANEK…EPKA) and 256–307 (DQKD…DKPK). One can recognise a PPIase FKBP-type domain in the interval 331–417 (GARVGMRYIG…TFDVKLVSLK (87 aa)).

The protein belongs to the FKBP-type PPIase family. FKBP3/4 subfamily.

The protein resides in the nucleus. It localises to the nucleolus. It carries out the reaction [protein]-peptidylproline (omega=180) = [protein]-peptidylproline (omega=0). Inhibited by both FK506 and rapamycin. Its function is as follows. PPIases accelerate the folding of proteins. It catalyzes the cis-trans isomerization of proline imidic peptide bonds in oligopeptides. The chain is FK506-binding protein 3 (FPR3) from Eremothecium gossypii (strain ATCC 10895 / CBS 109.51 / FGSC 9923 / NRRL Y-1056) (Yeast).